Here is a 433-residue protein sequence, read N- to C-terminus: MKKLFIQFYLLLFVCFLVMSLLVGLVYKFTAERAGKQSLDDLMNSSLYLMRSELREIPPHDWGKTLKEMDLNLSFDLRVEPLSKYHLDDISMHRLRGGEIVALDDQYTFLQRIPRSHYVLAVGPVPYLYYLHQMRLLDIALIAFIAISLAFPVFIWMRPHWQDMLKLEAAAQRFGDGHLNERIHFDEGSSFERLGVAFNQMADNINALIASKKQLIDGIAHELRTPLVRLRYRLEMSDNLSAAESQALNRDISQLEALIEELLTYARLDRPQNELHLSEPDLPLWLSTHLADIQAVTPDKTVRIKTLVQGHYAALDMRLMERVLDNLLNNALRYCHSTVETSLLLSGNRATLIVEDDGPGIAPENREHIFEPFVRLDPSRDRSTGGCGLGLAIVHSIALAMGGTVNCDTSELGGARFSFSWPLWHNIPQFTSA.

At 1 to 3 the chain is on the cytoplasmic side; that stretch reads MKK. Residues 4–24 traverse the membrane as a helical segment; that stretch reads LFIQFYLLLFVCFLVMSLLVG. Topologically, residues 25–135 are periplasmic; the sequence is LVYKFTAERA…PYLYYLHQMR (111 aa). The helical transmembrane segment at 136–156 threads the bilayer; that stretch reads LLDIALIAFIAISLAFPVFIW. Over 157–433 the chain is Cytoplasmic; sequence MRPHWQDMLK…WHNIPQFTSA (277 aa). Positions 158 to 210 constitute an HAMP domain; that stretch reads RPHWQDMLKLEAAAQRFGDGHLNERIHFDEGSSFERLGVAFNQMADNINALIA. The 208-residue stretch at 218–425 folds into the Histidine kinase domain; it reads GIAHELRTPL…RFSFSWPLWH (208 aa). H276 carries the phosphohistidine; by autocatalysis modification.

Post-translationally, autophosphorylated.

Its subcellular location is the cell inner membrane. It carries out the reaction ATP + protein L-histidine = ADP + protein N-phospho-L-histidine.. In terms of biological role, member of the two-component regulatory system RstB/RstA. RstB functions as a membrane-associated protein kinase that phosphorylates RstA. This chain is Sensor protein RstB (rstB), found in Escherichia coli (strain K12).